Reading from the N-terminus, the 117-residue chain is Large ribosomal subunit protein uL18 (117 aa).

It belongs to the universal ribosomal protein uL18 family. In terms of assembly, part of the 50S ribosomal subunit; part of the 5S rRNA/L5/L18/L25 subcomplex. Contacts the 5S and 23S rRNAs.

This is one of the proteins that bind and probably mediate the attachment of the 5S RNA into the large ribosomal subunit, where it forms part of the central protuberance. This is Large ribosomal subunit protein uL18 from Methylococcus capsulatus (strain ATCC 33009 / NCIMB 11132 / Bath).